Reading from the N-terminus, the 62-residue chain is MACEKPVKVRDPTTGKEVELVPIKVWQLAPRGRKGVKIGLFKSPETGKYFRAKVPDDYPICS.

This sequence belongs to the Cren7 family. Monomer. Methylated at multiple sites, to varying extents.

It is found in the chromosome. Its subcellular location is the cytoplasm. In terms of biological role, a chromatin protein, binds double-stranded DNA without sequence specificity. Constrains negative DNA supercoils. This chain is Chromatin protein Cren7 2 (cren7-2), found in Hyperthermus butylicus (strain DSM 5456 / JCM 9403 / PLM1-5).